The sequence spans 211 residues: MLTIALSKGRILDDTLPLLAAAGIVPSENPDKSRKLIIPTSLSDVRLLIVRATDVPTYVEHGAADLGVAGKDVLMEYGGQGLYEPLDLRIANCKLMTAGAIGAPEPKGRLRVATKFVNVAKRYYAEQGRQVDVIKLYGSMELAPLVGLADKIIDVVDTGNTLRANGLEPQELIATISSRLVVNKASMKMQHGRIQSLIDTLRDAVEARHRH.

This sequence belongs to the ATP phosphoribosyltransferase family. Short subfamily. Heteromultimer composed of HisG and HisZ subunits.

It is found in the cytoplasm. It catalyses the reaction 1-(5-phospho-beta-D-ribosyl)-ATP + diphosphate = 5-phospho-alpha-D-ribose 1-diphosphate + ATP. It participates in amino-acid biosynthesis; L-histidine biosynthesis; L-histidine from 5-phospho-alpha-D-ribose 1-diphosphate: step 1/9. Functionally, catalyzes the condensation of ATP and 5-phosphoribose 1-diphosphate to form N'-(5'-phosphoribosyl)-ATP (PR-ATP). Has a crucial role in the pathway because the rate of histidine biosynthesis seems to be controlled primarily by regulation of HisG enzymatic activity. In Pseudomonas aeruginosa (strain ATCC 15692 / DSM 22644 / CIP 104116 / JCM 14847 / LMG 12228 / 1C / PRS 101 / PAO1), this protein is ATP phosphoribosyltransferase (hisG).